The chain runs to 307 residues: Ornithine carbamoyltransferase (307 aa).

Carbamoyl phosphate contacts are provided by residues 50 to 53, glutamine 77, arginine 101, and 128 to 131; these read STRT and HPCQ. Residues asparagine 160, aspartate 224, and 228–229 each bind L-ornithine; that span reads SM. Carbamoyl phosphate is bound by residues 264-265 and arginine 292; that span reads CL.

This sequence belongs to the aspartate/ornithine carbamoyltransferase superfamily. OTCase family.

Its subcellular location is the cytoplasm. The catalysed reaction is carbamoyl phosphate + L-ornithine = L-citrulline + phosphate + H(+). It functions in the pathway amino-acid biosynthesis; L-arginine biosynthesis; L-arginine from L-ornithine and carbamoyl phosphate: step 1/3. With respect to regulation, inhibited by arginine, norvaline. Reversibly catalyzes the transfer of the carbamoyl group from carbamoyl phosphate (CP) to the N(epsilon) atom of ornithine (ORN) to produce L-citrulline, which is a substrate for argininosuccinate synthetase, the enzyme involved in the final step in arginine biosynthesis. The polypeptide is Ornithine carbamoyltransferase (Mycolicibacterium smegmatis (strain ATCC 700084 / mc(2)155) (Mycobacterium smegmatis)).